We begin with the raw amino-acid sequence, 388 residues long: Succinyl-diaminopimelate desuccinylase (388 aa).

Position 75 (His75) interacts with Zn(2+). The active site involves Asp77. Position 108 (Asp108) interacts with Zn(2+). The active-site Proton acceptor is Glu142. Zn(2+) contacts are provided by Glu143, Glu171, and His361.

The protein belongs to the peptidase M20A family. DapE subfamily. As to quaternary structure, homodimer. Zn(2+) serves as cofactor. Requires Co(2+) as cofactor.

The enzyme catalyses N-succinyl-(2S,6S)-2,6-diaminopimelate + H2O = (2S,6S)-2,6-diaminopimelate + succinate. Its pathway is amino-acid biosynthesis; L-lysine biosynthesis via DAP pathway; LL-2,6-diaminopimelate from (S)-tetrahydrodipicolinate (succinylase route): step 3/3. Its function is as follows. Catalyzes the hydrolysis of N-succinyl-L,L-diaminopimelic acid (SDAP), forming succinate and LL-2,6-diaminopimelate (DAP), an intermediate involved in the bacterial biosynthesis of lysine and meso-diaminopimelic acid, an essential component of bacterial cell walls. The protein is Succinyl-diaminopimelate desuccinylase of Methylocella silvestris (strain DSM 15510 / CIP 108128 / LMG 27833 / NCIMB 13906 / BL2).